Reading from the N-terminus, the 104-residue chain is Nucleoid-associated protein Dtur_0258 (104 aa).

The interval 84–104 (EKSAEKMGSLTDGLPLPPGLF) is disordered.

Belongs to the YbaB/EbfC family. Homodimer.

It localises to the cytoplasm. It is found in the nucleoid. Functionally, binds to DNA and alters its conformation. May be involved in regulation of gene expression, nucleoid organization and DNA protection. The chain is Nucleoid-associated protein Dtur_0258 from Dictyoglomus turgidum (strain DSM 6724 / Z-1310).